Consider the following 311-residue polypeptide: Aspartate carbamoyltransferase catalytic subunit (311 aa).

Carbamoyl phosphate is bound by residues R59 and T60. K87 lines the L-aspartate pocket. Residues R109, H139, and Q142 each coordinate carbamoyl phosphate. L-aspartate-binding residues include R172 and R224. Residues A265 and P266 each contribute to the carbamoyl phosphate site.

This sequence belongs to the aspartate/ornithine carbamoyltransferase superfamily. ATCase family. In terms of assembly, heterododecamer (2C3:3R2) of six catalytic PyrB chains organized as two trimers (C3), and six regulatory PyrI chains organized as three dimers (R2).

It carries out the reaction carbamoyl phosphate + L-aspartate = N-carbamoyl-L-aspartate + phosphate + H(+). The protein operates within pyrimidine metabolism; UMP biosynthesis via de novo pathway; (S)-dihydroorotate from bicarbonate: step 2/3. Functionally, catalyzes the condensation of carbamoyl phosphate and aspartate to form carbamoyl aspartate and inorganic phosphate, the committed step in the de novo pyrimidine nucleotide biosynthesis pathway. The chain is Aspartate carbamoyltransferase catalytic subunit from Streptococcus pyogenes serotype M4 (strain MGAS10750).